The sequence spans 111 residues: UPF0122 protein CKR_1296 (111 aa).

It belongs to the UPF0122 family.

Functionally, might take part in the signal recognition particle (SRP) pathway. This is inferred from the conservation of its genetic proximity to ftsY/ffh. May be a regulatory protein. The polypeptide is UPF0122 protein CKR_1296 (Clostridium kluyveri (strain NBRC 12016)).